A 306-amino-acid polypeptide reads, in one-letter code: Lipoyl synthase 2 (306 aa).

[4Fe-4S] cluster contacts are provided by cysteine 49, cysteine 54, cysteine 60, cysteine 75, cysteine 79, cysteine 82, and serine 300. A Radical SAM core domain is found at 61 to 289; the sequence is YAAGTATFLL…AEVACKLGFA (229 aa).

This sequence belongs to the radical SAM superfamily. Lipoyl synthase family. [4Fe-4S] cluster is required as a cofactor.

It localises to the cytoplasm. The catalysed reaction is [[Fe-S] cluster scaffold protein carrying a second [4Fe-4S](2+) cluster] + N(6)-octanoyl-L-lysyl-[protein] + 2 oxidized [2Fe-2S]-[ferredoxin] + 2 S-adenosyl-L-methionine + 4 H(+) = [[Fe-S] cluster scaffold protein] + N(6)-[(R)-dihydrolipoyl]-L-lysyl-[protein] + 4 Fe(3+) + 2 hydrogen sulfide + 2 5'-deoxyadenosine + 2 L-methionine + 2 reduced [2Fe-2S]-[ferredoxin]. The protein operates within protein modification; protein lipoylation via endogenous pathway; protein N(6)-(lipoyl)lysine from octanoyl-[acyl-carrier-protein]: step 2/2. Its function is as follows. Catalyzes the radical-mediated insertion of two sulfur atoms into the C-6 and C-8 positions of the octanoyl moiety bound to the lipoyl domains of lipoate-dependent enzymes, thereby converting the octanoylated domains into lipoylated derivatives. This Prochlorococcus marinus (strain MIT 9313) protein is Lipoyl synthase 2.